Consider the following 251-residue polypeptide: Ubiquinone/menaquinone biosynthesis C-methyltransferase UbiE (251 aa).

S-adenosyl-L-methionine contacts are provided by residues Thr74, Asp95, and 123-124 (NA).

This sequence belongs to the class I-like SAM-binding methyltransferase superfamily. MenG/UbiE family.

The enzyme catalyses a 2-demethylmenaquinol + S-adenosyl-L-methionine = a menaquinol + S-adenosyl-L-homocysteine + H(+). The catalysed reaction is a 2-methoxy-6-(all-trans-polyprenyl)benzene-1,4-diol + S-adenosyl-L-methionine = a 5-methoxy-2-methyl-3-(all-trans-polyprenyl)benzene-1,4-diol + S-adenosyl-L-homocysteine + H(+). The protein operates within quinol/quinone metabolism; menaquinone biosynthesis; menaquinol from 1,4-dihydroxy-2-naphthoate: step 2/2. It functions in the pathway cofactor biosynthesis; ubiquinone biosynthesis. Methyltransferase required for the conversion of demethylmenaquinol (DMKH2) to menaquinol (MKH2) and the conversion of 2-polyprenyl-6-methoxy-1,4-benzoquinol (DDMQH2) to 2-polyprenyl-3-methyl-6-methoxy-1,4-benzoquinol (DMQH2). This chain is Ubiquinone/menaquinone biosynthesis C-methyltransferase UbiE, found in Shewanella frigidimarina (strain NCIMB 400).